A 109-amino-acid polypeptide reads, in one-letter code: Large ribosomal subunit protein uL24 (109 aa).

It belongs to the universal ribosomal protein uL24 family. As to quaternary structure, part of the 50S ribosomal subunit.

In terms of biological role, one of two assembly initiator proteins, it binds directly to the 5'-end of the 23S rRNA, where it nucleates assembly of the 50S subunit. One of the proteins that surrounds the polypeptide exit tunnel on the outside of the subunit. The chain is Large ribosomal subunit protein uL24 from Ehrlichia canis (strain Jake).